The sequence spans 239 residues: Ribosomal RNA small subunit methyltransferase G (239 aa).

S-adenosyl-L-methionine is bound by residues G77, F82, 128–129 (AE), and R146. A disordered region spans residues 215 to 239 (DKKRQTPKKYPRKPGTPNKTPLLEK).

This sequence belongs to the methyltransferase superfamily. RNA methyltransferase RsmG family.

The protein localises to the cytoplasm. In terms of biological role, specifically methylates the N7 position of guanine in position 535 of 16S rRNA. This Staphylococcus aureus (strain bovine RF122 / ET3-1) protein is Ribosomal RNA small subunit methyltransferase G.